We begin with the raw amino-acid sequence, 343 residues long: Heat-inducible transcription repressor HrcA (343 aa).

This sequence belongs to the HrcA family.

Negative regulator of class I heat shock genes (grpE-dnaK-dnaJ and groELS operons). Prevents heat-shock induction of these operons. This is Heat-inducible transcription repressor HrcA from Natranaerobius thermophilus (strain ATCC BAA-1301 / DSM 18059 / JW/NM-WN-LF).